The primary structure comprises 890 residues: Translation initiation factor IF-2 (890 aa).

Positions 45 to 303 (LIDHLNQKNS…SLQQGFQKPA (259 aa)) are disordered. Positions 67 to 81 (STLNIPGTGGKSKSV) are enriched in polar residues. A compositionally biased stretch (basic and acidic residues) spans 92–217 (VKRDPQEAER…RMAEENKWTD (126 aa)). Basic residues predominate over residues 252–266 (GRGRNAKAARPKKGN). Basic and acidic residues predominate over residues 267-280 (KHAESKADREEARA). The tr-type G domain maps to 389–558 (PRAPVVTIMG…LLQAEVLELK (170 aa)). Residues 398 to 405 (GHVDHGKT) are G1. GTP is bound at residue 398–405 (GHVDHGKT). Residues 423–427 (GITQH) are G2. Residues 444 to 447 (DTPG) are G3. GTP contacts are provided by residues 444-448 (DTPGH) and 498-501 (NKID). A G4 region spans residues 498–501 (NKID). The segment at 534-536 (SAK) is G5. An N6-acetyllysine modification is found at lysine 808.

This sequence belongs to the TRAFAC class translation factor GTPase superfamily. Classic translation factor GTPase family. IF-2 subfamily.

It is found in the cytoplasm. One of the essential components for the initiation of protein synthesis. Protects formylmethionyl-tRNA from spontaneous hydrolysis and promotes its binding to the 30S ribosomal subunits. Also involved in the hydrolysis of GTP during the formation of the 70S ribosomal complex. The protein is Translation initiation factor IF-2 of Shigella boydii serotype 18 (strain CDC 3083-94 / BS512).